The primary structure comprises 122 residues: Large ribosomal subunit protein uL14c (122 aa).

Belongs to the universal ribosomal protein uL14 family. Part of the 50S ribosomal subunit.

The protein resides in the plastid. It is found in the chloroplast. Functionally, binds to 23S rRNA. This chain is Large ribosomal subunit protein uL14c, found in Lepidium virginicum (Virginia pepperweed).